Consider the following 401-residue polypeptide: MSKEKIAVAYSGGLDTSVMIKWLKDKYEGAEIVAVTGNLGQKMEVDNLEPKALATGAASFHFVDLRKTFVEDCIWKALKAGALYEDVYPLATALGRPILAKALVDVALAEGCTMLTHGCTGKGNDQVRFEVTFASLAPHMKVVAPLREWEFTSREQEITYALEHNIPVSATKKNPYSIDENIWGISIECGVLEDPMVPPPADAYQITTSPEEAPDKPTVVDIDFVEGIPVALDGQQMEGLDLIVKLNELGAMNGVGRLDMIENRVVGIKSREIYEAPAATILHFAHRELERLTLEKSVFQYKRNIGQDYANIIYNGTWFSPMREALDAFVDVTQKPVTGMVRLKLYKGNVTLLGRTSPNSLYNEELATYTEADTFNHKAAEGFIQLYGLGLKTYSEVNLGK.

Residue 9–17 coordinates ATP; sequence AYSGGLDTS. Residue Tyr-88 coordinates L-citrulline. Position 118 (Gly-118) interacts with ATP. The L-aspartate site is built by Thr-120, Asn-124, and Asp-125. Asn-124 is an L-citrulline binding site. L-citrulline-binding residues include Arg-128, Ser-177, Ser-186, Glu-262, and Tyr-274.

It belongs to the argininosuccinate synthase family. Type 1 subfamily. As to quaternary structure, homotetramer.

The protein resides in the cytoplasm. It carries out the reaction L-citrulline + L-aspartate + ATP = 2-(N(omega)-L-arginino)succinate + AMP + diphosphate + H(+). It functions in the pathway amino-acid biosynthesis; L-arginine biosynthesis; L-arginine from L-ornithine and carbamoyl phosphate: step 2/3. The polypeptide is Argininosuccinate synthase (Chlorobaculum parvum (strain DSM 263 / NCIMB 8327) (Chlorobium vibrioforme subsp. thiosulfatophilum)).